The following is a 321-amino-acid chain: DNA packaging protein (321 aa).

The interval 1 to 196 (MLSYDRILNF…DERRKTKFGQ (196 aa)) is ATPase. An ATP-binding site is contributed by 13–20 (GARGIGKS). The tract at residues 222–321 (KRSKNSKFVF…YEMFKKMRVQ (100 aa)) is DNA-binding.

The protein belongs to the phi29likevirus gp16 family. As to quaternary structure, homopentamer. Interacts with the packaging RNA (pRNA). Part of a DNA-gp3-gp16 complex.

The enzyme catalyses ATP + H2O = ADP + phosphate + H(+). Functionally, ATPase required for the genome encapsidation reaction. Part of the active packaging motor via the binding to the packaging RNA (pRNA), itself fixed to the head-tail connector at the unique portal vertex of the prohead. Binds and supercoils the pre-formed, unit-length DNA bound to gp3 to produce an initiation complex for DNA packaging. Provides the energy to actively pump the viral DNA into the prohead. Approximately one molecule of ATP is used in the packaging of 2 bp of viral DNA. ATP hydrolysis results in a conformational change that causes the arginine/lysine finger of one subunit to move into the active site of its neighbor, where it interacts with the negatively charged oxygens on the gamma-phosphate of ATP. After packaging, the ATPase and the pRNA are released from the prohead. This is DNA packaging protein (16) from Bacillus subtilis (Bacteriophage B103).